Consider the following 62-residue polypeptide: MPKCDICGKGSIRGFQYSHSNRRTIRRWKPNIRKVRAIVDGTHVTLNVCAKCLKAGKVQRAL.

Belongs to the bacterial ribosomal protein bL28 family.

The sequence is that of Large ribosomal subunit protein bL28 from Caldanaerobacter subterraneus subsp. tengcongensis (strain DSM 15242 / JCM 11007 / NBRC 100824 / MB4) (Thermoanaerobacter tengcongensis).